Reading from the N-terminus, the 167-residue chain is Caltractin (167 aa).

Residues Met1–Gly18 show a composition bias toward basic residues. Residues Met1–Lys23 are disordered. EF-hand domains lie at Gln22–Glu57, Met58–Glu93, Asp95–Asn130, and Phe131–Ala166. Ca(2+) contacts are provided by Asp35, Asp37, Ser39, Thr41, Glu46, Asp71, Asp73, Ser75, Glu82, Asp108, Asp110, Asn112, Lys114, Asp119, Asp144, Asp146, Asp148, Glu150, and Glu155.

Belongs to the centrin family.

It localises to the cytoplasm. Its subcellular location is the cytoskeleton. It is found in the microtubule organizing center. In terms of biological role, plays a fundamental role in microtubule-organizing center structure and function. The protein is Caltractin of Atriplex nummularia (Old man saltbush).